Reading from the N-terminus, the 604-residue chain is ERAD-associated E3 ubiquitin-protein ligase component HRD3B (604 aa).

The signal sequence occupies residues 1–25; the sequence is MRVSGQSIIAISLFTLSLYIHRVQA. A disordered region spans residues 48–69; sequence ESSDFDEFGESEPKSEEELDPG. N-linked (GlcNAc...) asparagine glycosylation is found at Asn-78 and Asn-105. Sel1-like repeat units follow at residues 125–160, 244–274, 279–307, 311–344, 346–380, 464–492, and 498–528; these read PHAQSVMGFVYGIGMMRETSRSKSILHHHFAAAGGN, VAMHKIGLFYYFGLRGLRRDHAKALYWFSKA, LGYLYVKGYGVDKRNYTKAREYFEMAANN, SGHYNLGVLYLKGTGVKKDVRHATKYFFVAANAG, PKAFYQLAKMFHTGVGLTKNLEMATTFYKLVAERG, AALLIGDAYYYGRGTERDFVRAAEAYMYA, and AQAMFNLGYMHEHGEGLPFDLHLAKRYYDQA. N-linked (GlcNAc...) asparagine glycosylation occurs at Asn-293.

This sequence belongs to the sel-1 family.

In terms of biological role, may be involved in the endoplasmic reticulum (ER) quality control system called ER-associated degradation (ERAD). This is ERAD-associated E3 ubiquitin-protein ligase component HRD3B from Arabidopsis thaliana (Mouse-ear cress).